A 261-amino-acid chain; its full sequence is MNEPLKTIRETKPLIHHITNWVTIYECANMTRAFGALPVMAHAPEECADMTKISSALVLNIGTLTSEIIDSMLLSAAAANERDIPVVLDAVGVGATKFRDEMAAKILASVHIDIIKGNYSEIAKLAGENAETKGVEATSIDADPAKVAKAFAKAESCVVVMTGKEDIISDGDRTFIVKNGHELMGSIVGTGCMAASIVGLFAAVNRDYCDAAKDALCYFGASGELAAAKSSGPGSFKVHLYDEVFNLSDEKVKSMKNFEEK.

Met-40 contacts substrate. The ATP site is built by Lys-116 and Thr-162. Gly-189 lines the substrate pocket.

Belongs to the Thz kinase family. The cofactor is Mg(2+).

It carries out the reaction 5-(2-hydroxyethyl)-4-methylthiazole + ATP = 4-methyl-5-(2-phosphooxyethyl)-thiazole + ADP + H(+). It functions in the pathway cofactor biosynthesis; thiamine diphosphate biosynthesis; 4-methyl-5-(2-phosphoethyl)-thiazole from 5-(2-hydroxyethyl)-4-methylthiazole: step 1/1. Its function is as follows. Catalyzes the phosphorylation of the hydroxyl group of 4-methyl-5-beta-hydroxyethylthiazole (THZ). In Methanosarcina acetivorans (strain ATCC 35395 / DSM 2834 / JCM 12185 / C2A), this protein is Hydroxyethylthiazole kinase.